The chain runs to 167 residues: CASP-like protein 3 (167 aa).

Over M1–K2 the chain is Cytoplasmic. A helical transmembrane segment spans residues I3–M23. The Extracellular portion of the chain corresponds to A24–N48. A helical membrane pass occupies residues Y49 to V69. Topologically, residues N70–P80 are cytoplasmic. A helical transmembrane segment spans residues F81–A101. Residues S102–E137 lie on the Extracellular side of the membrane. Residues A138–G158 traverse the membrane as a helical segment. At Y159 to V167 the chain is on the cytoplasmic side.

Belongs to the Casparian strip membrane proteins (CASP) family. In terms of assembly, homodimer and heterodimers.

It is found in the cell membrane. The chain is CASP-like protein 3 from Osmunda lancea (Fern).